Consider the following 235-residue polypeptide: Phosphoribosylaminoimidazole-succinocarboxamide synthase (235 aa).

The protein belongs to the SAICAR synthetase family.

The enzyme catalyses 5-amino-1-(5-phospho-D-ribosyl)imidazole-4-carboxylate + L-aspartate + ATP = (2S)-2-[5-amino-1-(5-phospho-beta-D-ribosyl)imidazole-4-carboxamido]succinate + ADP + phosphate + 2 H(+). It functions in the pathway purine metabolism; IMP biosynthesis via de novo pathway; 5-amino-1-(5-phospho-D-ribosyl)imidazole-4-carboxamide from 5-amino-1-(5-phospho-D-ribosyl)imidazole-4-carboxylate: step 1/2. In Clostridium perfringens (strain 13 / Type A), this protein is Phosphoribosylaminoimidazole-succinocarboxamide synthase.